A 203-amino-acid polypeptide reads, in one-letter code: Small ribosomal subunit protein uS7 (203 aa).

A disordered region spans residues 1–21 (MSSEAPEPDAPASTDDERVSA).

The protein belongs to the universal ribosomal protein uS7 family. In terms of assembly, part of the 30S ribosomal subunit.

One of the primary rRNA binding proteins, it binds directly to 16S rRNA where it nucleates assembly of the head domain of the 30S subunit. Is located at the subunit interface close to the decoding center. The chain is Small ribosomal subunit protein uS7 from Natronomonas pharaonis (strain ATCC 35678 / DSM 2160 / CIP 103997 / JCM 8858 / NBRC 14720 / NCIMB 2260 / Gabara) (Halobacterium pharaonis).